Reading from the N-terminus, the 848-residue chain is DNA mismatch repair protein MutS (848 aa).

610-617 is an ATP binding site; sequence GPNMGGKS.

This sequence belongs to the DNA mismatch repair MutS family.

In terms of biological role, this protein is involved in the repair of mismatches in DNA. It is possible that it carries out the mismatch recognition step. This protein has a weak ATPase activity. The chain is DNA mismatch repair protein MutS from Francisella philomiragia subsp. philomiragia (strain ATCC 25017 / CCUG 19701 / FSC 153 / O#319-036).